Here is a 381-residue protein sequence, read N- to C-terminus: Alkanesulfonate monooxygenase (381 aa).

Belongs to the SsuD family. In terms of assembly, homotetramer.

It catalyses the reaction an alkanesulfonate + FMNH2 + O2 = an aldehyde + FMN + sulfite + H2O + 2 H(+). Catalyzes the desulfonation of aliphatic sulfonates. This Escherichia coli O6:K15:H31 (strain 536 / UPEC) protein is Alkanesulfonate monooxygenase.